Here is a 245-residue protein sequence, read N- to C-terminus: GATA zinc finger domain-containing protein 1 (245 aa).

A GATA-type zinc finger spans residues 9-33; that stretch reads CSMCKTNTSSMWKKGSQGEILCNNC. The span at 39 to 70 shows a compositional bias: low complexity; the sequence is TAAGGNNNNNSSSSTSGSSSYTGTTFASTSTS. Residues 39–110 are disordered; the sequence is TAAGGNNNNN…PAAEKKVSTK (72 aa). Positions 71–80 are enriched in polar residues; the sequence is QQSNGGNTKQ.

Its subcellular location is the nucleus. In terms of biological role, component of some chromatin complex recruited to chromatin sites methylated 'Lys-4' of histone H3 (H3K4me), with a preference for trimethylated form (H3K4me3). This chain is GATA zinc finger domain-containing protein 1 (gatad1), found in Xenopus laevis (African clawed frog).